Reading from the N-terminus, the 1165-residue chain is DNA-directed RNA polymerase subunit beta (1165 aa).

This sequence belongs to the RNA polymerase beta chain family. In terms of assembly, the RNAP catalytic core consists of 2 alpha, 1 beta, 1 beta' and 1 omega subunit. When a sigma factor is associated with the core the holoenzyme is formed, which can initiate transcription.

It catalyses the reaction RNA(n) + a ribonucleoside 5'-triphosphate = RNA(n+1) + diphosphate. Its function is as follows. DNA-dependent RNA polymerase catalyzes the transcription of DNA into RNA using the four ribonucleoside triphosphates as substrates. The polypeptide is DNA-directed RNA polymerase subunit beta (Corynebacterium glutamicum (strain R)).